The sequence spans 244 residues: tRNA pseudouridine synthase A (244 aa).

The Nucleophile role is filled by Asp52. Tyr110 contacts substrate.

It belongs to the tRNA pseudouridine synthase TruA family. In terms of assembly, homodimer.

It catalyses the reaction uridine(38/39/40) in tRNA = pseudouridine(38/39/40) in tRNA. Formation of pseudouridine at positions 38, 39 and 40 in the anticodon stem and loop of transfer RNAs. This Clostridium acetobutylicum (strain ATCC 824 / DSM 792 / JCM 1419 / IAM 19013 / LMG 5710 / NBRC 13948 / NRRL B-527 / VKM B-1787 / 2291 / W) protein is tRNA pseudouridine synthase A.